A 190-amino-acid polypeptide reads, in one-letter code: Putative resolvase R771 (190 aa).

A DNA-binding region (H-T-H motif) is located at residues 11–30 (SSVLGVHQRTLYQWDKKGWI). The Resolvase/invertase-type recombinase catalytic domain occupies 61 to 190 (LSICYVRVSS…RNGLKKYSNK (130 aa)). A coiled-coil region spans residues 66–92 (VRVSSNNQKDDLERQIKFMKKKYPNHT). Residue Ser-69 is the O-(5'-phospho-DNA)-serine intermediate of the active site.

It belongs to the site-specific recombinase resolvase family.

Resolvase catalyzes the resolution (a site-specific recombination) of the cointegrated replicon to yield the final transposition products. The sequence is that of Putative resolvase R771 from Acanthamoeba polyphaga (Amoeba).